A 90-amino-acid chain; its full sequence is Small ribosomal subunit protein bS20 (90 aa).

This sequence belongs to the bacterial ribosomal protein bS20 family.

Binds directly to 16S ribosomal RNA. The protein is Small ribosomal subunit protein bS20 of Francisella philomiragia subsp. philomiragia (strain ATCC 25017 / CCUG 19701 / FSC 153 / O#319-036).